Here is a 174-residue protein sequence, read N- to C-terminus: Large ribosomal subunit protein uL16 (174 aa).

Belongs to the universal ribosomal protein uL16 family.

The polypeptide is Large ribosomal subunit protein uL16 (Archaeoglobus fulgidus (strain ATCC 49558 / DSM 4304 / JCM 9628 / NBRC 100126 / VC-16)).